A 327-amino-acid chain; its full sequence is Interleukin-12 subunit beta (327 aa).

The first 22 residues, 1-22 (MHPQQLVVSWFSLVLLASPIVA), serve as a signal peptide directing secretion. The 84-residue stretch at 23-106 (IWELEKNVYI…LSRSLLLLHK (84 aa)) folds into the Ig-like C2-type domain. A disulfide bond links C50 and C90. Residue N223 is glycosylated (N-linked (GlcNAc...) asparagine). Residues 238 to 327 (PPKNLQLRPL…WSEWASVSCS (90 aa)) enclose the Fibronectin type-III domain.

The protein belongs to the IL-12B family. As to quaternary structure, heterodimer with IL12A; disulfide-linked. The heterodimer is known as interleukin IL-12. Heterodimer with IL23A; disulfide-linked. The heterodimer is known as interleukin IL-23. Also secreted as a monomer. Interacts with NBR1; this interaction promotes IL-12 secretion.

The protein localises to the secreted. In terms of biological role, cytokine that can act as a growth factor for activated T and NK cells, enhance the lytic activity of NK/lymphokine-activated killer cells, and stimulate the production of IFN-gamma by resting PBMC. The chain is Interleukin-12 subunit beta (IL12B) from Bubalus carabanensis (Swamp type water buffalo).